The following is a 368-amino-acid chain: tRNA-specific 2-thiouridylase MnmA (368 aa).

Residues 11–18 (GMSGGVDS) and Met-37 contribute to the ATP site. Positions 97–99 (NPD) are interaction with target base in tRNA. Catalysis depends on Cys-102, which acts as the Nucleophile. A disulfide bridge links Cys-102 with Cys-199. Residue Gly-127 participates in ATP binding. The segment at 149–151 (KDQ) is interaction with tRNA. Cys-199 acts as the Cysteine persulfide intermediate in catalysis. Positions 311 to 312 (RY) are interaction with tRNA.

Belongs to the MnmA/TRMU family. In terms of assembly, interacts with TusE.

The protein localises to the cytoplasm. The catalysed reaction is S-sulfanyl-L-cysteinyl-[protein] + uridine(34) in tRNA + AH2 + ATP = 2-thiouridine(34) in tRNA + L-cysteinyl-[protein] + A + AMP + diphosphate + H(+). In terms of biological role, catalyzes the 2-thiolation of uridine at the wobble position (U34) of tRNA(Lys), tRNA(Glu) and tRNA(Gln), leading to the formation of s(2)U34, the first step of tRNA-mnm(5)s(2)U34 synthesis. Sulfur is provided by IscS, via a sulfur-relay system. Binds ATP and its substrate tRNAs. This chain is tRNA-specific 2-thiouridylase MnmA, found in Salmonella typhimurium (strain LT2 / SGSC1412 / ATCC 700720).